The primary structure comprises 147 residues: Large ribosomal subunit protein uL16 (147 aa).

It belongs to the universal ribosomal protein uL16 family. Part of the 50S ribosomal subunit.

Functionally, binds 23S rRNA and is also seen to make contacts with the A and possibly P site tRNAs. This chain is Large ribosomal subunit protein uL16, found in Clostridium novyi (strain NT).